The sequence spans 280 residues: 4-diphosphocytidyl-2-C-methyl-D-erythritol kinase (280 aa).

Lysine 8 is a catalytic residue. Proline 91–threonine 101 contributes to the ATP binding site. Aspartate 133 is an active-site residue.

Belongs to the GHMP kinase family. IspE subfamily.

It catalyses the reaction 4-CDP-2-C-methyl-D-erythritol + ATP = 4-CDP-2-C-methyl-D-erythritol 2-phosphate + ADP + H(+). It participates in isoprenoid biosynthesis; isopentenyl diphosphate biosynthesis via DXP pathway; isopentenyl diphosphate from 1-deoxy-D-xylulose 5-phosphate: step 3/6. Functionally, catalyzes the phosphorylation of the position 2 hydroxy group of 4-diphosphocytidyl-2C-methyl-D-erythritol. This chain is 4-diphosphocytidyl-2-C-methyl-D-erythritol kinase, found in Clostridium botulinum (strain Alaska E43 / Type E3).